Consider the following 276-residue polypeptide: Undecaprenyl-diphosphatase (276 aa).

The next 6 helical transmembrane spans lie at 43–63, 85–105, 109–129, 183–203, 214–234, and 249–269; these read RAMA…VWEF, GNLL…ADLI, LFNP…MLWA, AATE…AVYS, ADLP…MIAV, and FAWY…FGWV.

Belongs to the UppP family.

The protein localises to the cell inner membrane. It catalyses the reaction di-trans,octa-cis-undecaprenyl diphosphate + H2O = di-trans,octa-cis-undecaprenyl phosphate + phosphate + H(+). Functionally, catalyzes the dephosphorylation of undecaprenyl diphosphate (UPP). Confers resistance to bacitracin. In Pseudomonas putida (strain GB-1), this protein is Undecaprenyl-diphosphatase.